We begin with the raw amino-acid sequence, 102 residues long: Neuropeptide F (102 aa).

A signal peptide spans 1-29 (MSNTMRCILIVCVALTLIAAGCNVEASNS). The propeptide occupies 30 to 32 (RPP). The residue at position 62 (Phe-62) is a Phenylalanine amide. A propeptide spanning residues 66–102 (GGPLMEMLRNRELENNMAKSINSGGELIRALDEEEVF) is cleaved from the precursor.

It belongs to the NPY family.

It localises to the secreted. In terms of biological role, an integral part of the sensory system that mediates food signaling, providing the neural basis for the regulation of food response; coordinates larval foraging and social behavior changes during development. May have a hormonal role in females. This Drosophila pseudoobscura pseudoobscura (Fruit fly) protein is Neuropeptide F.